A 110-amino-acid chain; its full sequence is Phosphoribosyl-ATP pyrophosphatase (110 aa).

Belongs to the PRA-PH family.

It is found in the cytoplasm. It carries out the reaction 1-(5-phospho-beta-D-ribosyl)-ATP + H2O = 1-(5-phospho-beta-D-ribosyl)-5'-AMP + diphosphate + H(+). It participates in amino-acid biosynthesis; L-histidine biosynthesis; L-histidine from 5-phospho-alpha-D-ribose 1-diphosphate: step 2/9. The chain is Phosphoribosyl-ATP pyrophosphatase from Stutzerimonas stutzeri (strain A1501) (Pseudomonas stutzeri).